Consider the following 598-residue polypeptide: 2-succinyl-5-enolpyruvyl-6-hydroxy-3-cyclohexene-1-carboxylate synthase (598 aa).

This sequence belongs to the TPP enzyme family. MenD subfamily. As to quaternary structure, homodimer. Mg(2+) is required as a cofactor. Mn(2+) serves as cofactor. Requires thiamine diphosphate as cofactor.

The enzyme catalyses isochorismate + 2-oxoglutarate + H(+) = 5-enolpyruvoyl-6-hydroxy-2-succinyl-cyclohex-3-ene-1-carboxylate + CO2. The protein operates within quinol/quinone metabolism; 1,4-dihydroxy-2-naphthoate biosynthesis; 1,4-dihydroxy-2-naphthoate from chorismate: step 2/7. Its pathway is cofactor biosynthesis; phylloquinone biosynthesis. In terms of biological role, catalyzes the thiamine diphosphate-dependent decarboxylation of 2-oxoglutarate and the subsequent addition of the resulting succinic semialdehyde-thiamine pyrophosphate anion to isochorismate to yield 2-succinyl-5-enolpyruvyl-6-hydroxy-3-cyclohexene-1-carboxylate (SEPHCHC). This Prochlorococcus marinus (strain NATL1A) protein is 2-succinyl-5-enolpyruvyl-6-hydroxy-3-cyclohexene-1-carboxylate synthase.